A 596-amino-acid chain; its full sequence is Transcription factor EGL1 (596 aa).

The bHLH domain occupies 401 to 450 (EETGNHALSEKKRREKLNERFMTLRSIIPSISKIDKVSILDDTIEYLQDL).

Efficient DNA binding requires dimerization with another bHLH protein. Homodimer and heterodimer with GL3. Interacts with CPC, MYB0/GL1, MYB5, MYB23, MYB113, MYB114, MYB75/PAP1, MYB90/PAP2, TT2, TRY, TTG1 and MYB66/WER. As to expression, ubiquitous with higher levels in buds and flowers. Specifically localized in developing root hair cells. Expressed in epidermal root hair cells (trichoblasts) and moves to root hairless cells (atrichoblasts) by a cell-to-cell movement through plasmodesmata (at protein level).

The protein localises to the nucleus. Functionally, transcription activator, when associated with MYB75/PAP1, MYB90/PAP2 or TT2. Involved in epidermal cell fate specification. Negatively regulates stomata formation but promotes trichome formation. Together with MYB66/WER, promotes the formation of non-hair cells in root epidermis cells in the N position. Whereas together with CPC, promotes the formation of hair cells in root epidermis cells in the H position by inhibiting non-hair cell formation. Also seems to play a role in the activation of anthocyanin biosynthesis, probably together with MYB75/PAP1. Involved in seed mucilage production. Activates the transcription of GL2. This Arabidopsis thaliana (Mouse-ear cress) protein is Transcription factor EGL1 (BHLH2).